The sequence spans 63 residues: Large ribosomal subunit protein bL32 (63 aa).

Residues Met1–Arg23 form a disordered region. Basic residues predominate over residues Lys7 to Ala18.

The protein belongs to the bacterial ribosomal protein bL32 family.

The chain is Large ribosomal subunit protein bL32 from Prosthecochloris aestuarii (strain DSM 271 / SK 413).